The primary structure comprises 78 residues: Acyl carrier protein (78 aa).

A Carrier domain is found at 2–77 (DELFLRMRAL…DAYEFIKSKV (76 aa)). O-(pantetheine 4'-phosphoryl)serine is present on serine 37.

This sequence belongs to the acyl carrier protein (ACP) family. Post-translationally, 4'-phosphopantetheine is transferred from CoA to a specific serine of apo-ACP by AcpS. This modification is essential for activity because fatty acids are bound in thioester linkage to the sulfhydryl of the prosthetic group.

It localises to the cytoplasm. The protein operates within lipid metabolism; fatty acid biosynthesis. In terms of biological role, carrier of the growing fatty acid chain in fatty acid biosynthesis. In Treponema pallidum (strain Nichols), this protein is Acyl carrier protein.